Here is a 569-residue protein sequence, read N- to C-terminus: Probable diguanylate cyclase DgcQ (569 aa).

The next 2 membrane-spanning stretches (helical) occupy residues 25-45 (LGPGHVVNLCFIVVLLFSTLL) and 365-385 (IALTLLWALFTTMLLISWYVI). A GGDEF domain is found at 433-568 (HPFSVIQVDL…GRNRVCASDN (136 aa)). Mg(2+) is bound at residue D441. Positions 449, 454, and 458 each coordinate substrate. E484 serves as a coordination point for Mg(2+). Catalysis depends on E484, which acts as the Proton acceptor.

In terms of assembly, homodimer. Mg(2+) serves as cofactor.

Its subcellular location is the cell inner membrane. It catalyses the reaction 2 GTP = 3',3'-c-di-GMP + 2 diphosphate. It participates in glycan metabolism; bacterial cellulose biosynthesis. It functions in the pathway purine metabolism; 3',5'-cyclic di-GMP biosynthesis. In terms of biological role, catalyzes the synthesis of cyclic-di-GMP (c-di-GMP) via the condensation of 2 GTP molecules. Cyclic-di-GMP is a second messenger which controls cell surface-associated traits in bacteria. Involved in the regulation of cellulose production. This Shigella sonnei (strain Ss046) protein is Probable diguanylate cyclase DgcQ.